The chain runs to 555 residues: WRKY transcription factor WRKY24 (555 aa).

Disordered regions lie at residues 38–65 and 132–248; these read GGGG…PSSF and QTAP…CTFP. Residues 51-61 show a composition bias toward pro residues; the sequence is PSLPLSPPPVS. Low complexity predominate over residues 163–194; it reads QQQQQPWGYQQQPAGMDAGANAASFGAAPFQA. Residues 214–278 constitute a DNA-binding region (WRKY 1); that stretch reads SQRRSSDDGY…YKGTHNHAKP (65 aa). Positions 253-259 match the Nuclear localization signal motif; sequence KKKVERS. The disordered stretch occupies residues 270–367; sequence KGTHNHAKPQ…EGISMAGNRT (98 aa). Composition is skewed to polar residues over residues 277 to 294 and 310 to 320; these read KPQN…QVLQ and TAATPENSSAS. Over residues 347 to 356 the composition is skewed to basic and acidic residues; it reads DSKRWRKDGD. Residues 379-444 constitute a DNA-binding region (WRKY 2); the sequence is SDIDILDDGY…YEGKHNHDVP (66 aa). A transcription repression of gibberellic acid (GA)-induced promoters region spans residues 466-555; that stretch reads HPYLPNQPPP…DDMFFQNSLY (90 aa). Disordered stretches follow at residues 471-498 and 513-555; these read NQPP…GQGP and GFDD…NSLY.

This sequence belongs to the WRKY group II-a family. In terms of tissue distribution, expressed in aleurone cells. Mostly expressed in aleurone layers and leaves, and, to a lower extent, in roots, panicles and embryos.

It localises to the nucleus. Transcription repressor. Interacts specifically with the W box (5'-(T)TGAC[CT]-3'), a frequently occurring elicitor-responsive cis-acting element. Negative regulator of both gibberellic acid (GA) and abscisic acid (ABA) signaling in aleurone cells, probably by interfering with GAM1, via the specific repression of GA- and ABA-induced promoters. In Oryza sativa subsp. indica (Rice), this protein is WRKY transcription factor WRKY24.